The following is a 188-amino-acid chain: MILPINIYNDEVLRATAKPLKGIDRNIRDLVASMLESMRNASGIGLAAPQVGCSIRLLVIDLSCMEKYADEKPVVVINPHLLAVKGYNAMEEGCLSLPGILGDVVRPSSITLKYRDEHFEERTGEFSGMMARVLQHEIDHLDGKLFIDRMQKRDRRKIDKELHSLAIGNVEADYPLALAGIAQKACEA.

Cys-94 and His-136 together coordinate Fe cation. The active site involves Glu-137. His-140 lines the Fe cation pocket.

The protein belongs to the polypeptide deformylase family. The cofactor is Fe(2+).

The enzyme catalyses N-terminal N-formyl-L-methionyl-[peptide] + H2O = N-terminal L-methionyl-[peptide] + formate. Removes the formyl group from the N-terminal Met of newly synthesized proteins. Requires at least a dipeptide for an efficient rate of reaction. N-terminal L-methionine is a prerequisite for activity but the enzyme has broad specificity at other positions. This Chlorobium phaeobacteroides (strain DSM 266 / SMG 266 / 2430) protein is Peptide deformylase.